Reading from the N-terminus, the 232-residue chain is Phosphatidylserine decarboxylase proenzyme (232 aa).

Serine 201 acts as the Schiff-base intermediate with substrate; via pyruvic acid in catalysis. The residue at position 201 (serine 201) is a Pyruvic acid (Ser); by autocatalysis.

Belongs to the phosphatidylserine decarboxylase family. PSD-A subfamily. Heterodimer of a large membrane-associated beta subunit and a small pyruvoyl-containing alpha subunit. Pyruvate is required as a cofactor. Post-translationally, is synthesized initially as an inactive proenzyme. Formation of the active enzyme involves a self-maturation process in which the active site pyruvoyl group is generated from an internal serine residue via an autocatalytic post-translational modification. Two non-identical subunits are generated from the proenzyme in this reaction, and the pyruvate is formed at the N-terminus of the alpha chain, which is derived from the carboxyl end of the proenzyme. The post-translation cleavage follows an unusual pathway, termed non-hydrolytic serinolysis, in which the side chain hydroxyl group of the serine supplies its oxygen atom to form the C-terminus of the beta chain, while the remainder of the serine residue undergoes an oxidative deamination to produce ammonia and the pyruvoyl prosthetic group on the alpha chain.

Its subcellular location is the cell membrane. It carries out the reaction a 1,2-diacyl-sn-glycero-3-phospho-L-serine + H(+) = a 1,2-diacyl-sn-glycero-3-phosphoethanolamine + CO2. It functions in the pathway phospholipid metabolism; phosphatidylethanolamine biosynthesis; phosphatidylethanolamine from CDP-diacylglycerol: step 2/2. Functionally, catalyzes the formation of phosphatidylethanolamine (PtdEtn) from phosphatidylserine (PtdSer). The protein is Phosphatidylserine decarboxylase proenzyme of Mycolicibacterium smegmatis (strain ATCC 700084 / mc(2)155) (Mycobacterium smegmatis).